The sequence spans 586 residues: Penicillin-binding protein activator LpoA (586 aa).

Positions Met-1–Gly-26 are cleaved as a signal peptide. Cys-27 is lipidated: N-palmitoyl cysteine. Cys-27 carries the S-diacylglycerol cysteine lipid modification.

This sequence belongs to the LpoA family. In terms of assembly, interacts with PBP1a.

It localises to the cell outer membrane. Functionally, regulator of peptidoglycan synthesis that is essential for the function of penicillin-binding protein 1A (PBP1a). The protein is Penicillin-binding protein activator LpoA of Histophilus somni (strain 2336) (Haemophilus somnus).